A 153-amino-acid chain; its full sequence is Large ribosomal subunit protein uL15 (153 aa).

The interval 15–42 (ARRIVGRGSSSGRGTTSGRGTKGQQARA) is disordered. Residues 23–35 (SSSGRGTTSGRGT) show a composition bias toward gly residues.

This sequence belongs to the universal ribosomal protein uL15 family. Part of the 50S ribosomal subunit.

Binds to the 23S rRNA. The protein is Large ribosomal subunit protein uL15 of Treponema pallidum (strain Nichols).